The following is a 199-amino-acid chain: MVLFSEDHIQETRRRGRIEVICGSMFSGKTEELIRRMKRAKFARQRVEIFKPAIDTRYSEGDVVSHDSNSISSTPIDSSASILLFTSEIDVVGIDEAQFFDSGLIDVCNQLANNGVRVIIAGLDMDFKGIPFGPMPALCAIADEVSKVHAICVKCGQLASFSHRTVKNDKQVLLGETAQYEPLCRECYQRALQEDREKS.

Residues 23–30 and 95–98 each bind ATP; these read GSMFSGKT and DEAQ. Glu-96 functions as the Proton acceptor in the catalytic mechanism. The Zn(2+) site is built by Cys-152, Cys-155, Cys-184, and Cys-187.

This sequence belongs to the thymidine kinase family. In terms of assembly, homotetramer.

It localises to the cytoplasm. The enzyme catalyses thymidine + ATP = dTMP + ADP + H(+). This chain is Thymidine kinase, found in Bacteroides fragilis (strain ATCC 25285 / DSM 2151 / CCUG 4856 / JCM 11019 / LMG 10263 / NCTC 9343 / Onslow / VPI 2553 / EN-2).